The following is a 302-amino-acid chain: 4-hydroxy-tetrahydrodipicolinate synthase (302 aa).

Threonine 49 is a pyruvate binding site. The Proton donor/acceptor role is filled by tyrosine 137. Lysine 166 (schiff-base intermediate with substrate) is an active-site residue. Isoleucine 208 contributes to the pyruvate binding site.

Belongs to the DapA family. Homotetramer; dimer of dimers.

The protein resides in the cytoplasm. It catalyses the reaction L-aspartate 4-semialdehyde + pyruvate = (2S,4S)-4-hydroxy-2,3,4,5-tetrahydrodipicolinate + H2O + H(+). Its pathway is amino-acid biosynthesis; L-lysine biosynthesis via DAP pathway; (S)-tetrahydrodipicolinate from L-aspartate: step 3/4. Catalyzes the condensation of (S)-aspartate-beta-semialdehyde [(S)-ASA] and pyruvate to 4-hydroxy-tetrahydrodipicolinate (HTPA). This is 4-hydroxy-tetrahydrodipicolinate synthase from Chloroherpeton thalassium (strain ATCC 35110 / GB-78).